The following is a 262-amino-acid chain: Pyridoxine 5'-phosphate synthase (262 aa).

Asn6 provides a ligand contact to 3-amino-2-oxopropyl phosphate. Residue 8 to 9 (DH) coordinates 1-deoxy-D-xylulose 5-phosphate. A 3-amino-2-oxopropyl phosphate-binding site is contributed by Arg17. The active-site Proton acceptor is His43. Residues Arg45 and His50 each coordinate 1-deoxy-D-xylulose 5-phosphate. Glu70 functions as the Proton acceptor in the catalytic mechanism. Thr102 serves as a coordination point for 1-deoxy-D-xylulose 5-phosphate. The active-site Proton donor is His215. Residues Gly216 and 237–238 (GH) each bind 3-amino-2-oxopropyl phosphate.

The protein belongs to the PNP synthase family. Homooctamer; tetramer of dimers.

It is found in the cytoplasm. The catalysed reaction is 3-amino-2-oxopropyl phosphate + 1-deoxy-D-xylulose 5-phosphate = pyridoxine 5'-phosphate + phosphate + 2 H2O + H(+). Its pathway is cofactor biosynthesis; pyridoxine 5'-phosphate biosynthesis; pyridoxine 5'-phosphate from D-erythrose 4-phosphate: step 5/5. In terms of biological role, catalyzes the complicated ring closure reaction between the two acyclic compounds 1-deoxy-D-xylulose-5-phosphate (DXP) and 3-amino-2-oxopropyl phosphate (1-amino-acetone-3-phosphate or AAP) to form pyridoxine 5'-phosphate (PNP) and inorganic phosphate. The sequence is that of Pyridoxine 5'-phosphate synthase from Helicobacter pylori (strain J99 / ATCC 700824) (Campylobacter pylori J99).